The following is a 623-amino-acid chain: Chaperone protein HtpG (623 aa).

An a; substrate-binding region spans residues 1–336 (MSETNTQKAA…TEDLPLNVSR (336 aa)). Positions 337-546 (EMLQATPVLA…DGGPDLTMQR (210 aa)) are b. The interval 547 to 623 (LMRRSGQAMP…ATLLAGPAAE (77 aa)) is c.

This sequence belongs to the heat shock protein 90 family. Homodimer.

The protein resides in the cytoplasm. Functionally, molecular chaperone. Has ATPase activity. The chain is Chaperone protein HtpG from Gluconobacter oxydans (strain 621H) (Gluconobacter suboxydans).